Reading from the N-terminus, the 994-residue chain is Chloride channel protein 1 (994 aa).

The Cytoplasmic portion of the chain corresponds to 1–118 (MERSQSQQHG…VLRRKLGEDW (118 aa)). Positions 37 to 61 (SENGGLQHRPRKDLGPRHNAHPTQI) are disordered. Residues 119–150 (IFLVLLGLLMALVSWCMDYVSAKSLQAYKWTY) traverse the membrane as a helical segment. Residues 151-158 (AQMQPSLP) lie on the Extracellular side of the membrane. The chain crosses the membrane as a helical span at residues 159–179 (LQYLAWVTFPLILILFSALFC). Residues 180–183 (QLIS) lie on the Cytoplasmic side of the membrane. The segment at residues 184–189 (PQAVGS) is an intramembrane region (note=Loop between two helices). A Selectivity filter part_1 motif is present at residues 188–192 (GSGIP). Ser189 provides a ligand contact to chloride. The helical intramembrane region spans 190 to 195 (GIPEMK). Topologically, residues 196–208 (TILRGVVLKEYLT) are cytoplasmic. The segment at residues 209-224 (LKAFVAKVVALTAGLG) is an intramembrane region (helical). The segment at residues 225 to 230 (SGIPVG) is an intramembrane region (note=Loop between two helices). Positions 230–234 (GKEGP) match the Selectivity filter part_2 motif. Positions 231–246 (KEGPFVHIASICAAVL) form an intramembrane region, helical. Over 247 to 268 (SKFMSMFSGVYEQPYYYTDILT) the chain is Cytoplasmic. 2 consecutive intramembrane regions (helical) follow at residues 269-280 (VGCAVGVGCCFG) and 281-290 (TPLGGVLFSI). Over 291 to 301 (EVTSTYFAVRN) the chain is Cytoplasmic. Residues 302-321 (YWRGFFAATFSAFVFRVLAV) form a helical membrane-spanning segment. The Extracellular segment spans residues 322–347 (WNKDAVTITALFRTNFRMDFPFDLKE). The helical transmembrane segment at 348–376 (LPAFAVIGICCGFLGAVFVYLHRQVMLGV) threads the bilayer. The Cytoplasmic portion of the chain corresponds to 377 to 390 (RKHKALSQFLAKHR). A helical transmembrane segment spans residues 391–408 (LLYPGIVTFVIASLTFPP). Residues 409–414 (GMGQFM) are Extracellular-facing. Residues 415–418 (AGEL) constitute an intramembrane region (note=Loop between two helices). An intramembrane region (helical) is located at residues 419 to 426 (MPREAIST). Residues 427–457 (LFDNNTWVKHIGDPKSLGQSAVWIHPQVNVV) lie on the Extracellular side of the membrane. An intramembrane region (helical) is located at residues 458–475 (IIILLFFVMKFWMSIVAT). The segment at residues 476–482 (TMPIPCG) is an intramembrane region (note=Loop between two helices). The short motif at 482 to 486 (GGFMP) is the Selectivity filter part_3 element. The helical intramembrane region spans 483–498 (GFMPVFVLGAAFGRLV). Chloride is bound at residue Phe484. The Extracellular portion of the chain corresponds to 499-521 (GEIMAMLFPEGILFDDIIYKILP). The segment at residues 522–538 (GGYAVIGAAALTGAVSH) is an intramembrane region (helical). An intramembrane region (note=Loop between two helices) is located at residues 539–540 (TV). An intramembrane region (helical) is located at residues 541–554 (STAVICFELTGQIA). Residues 555–557 (HIL) lie on the Extracellular side of the membrane. Positions 558-571 (PMMVAVILANMVAQ) form an intramembrane region, helical. The note=Loop between two helices intramembrane region spans 572–575 (SLQP). An intramembrane region (helical) is located at residues 576-578 (SLY). A chloride-binding site is contributed by Tyr578. Over 579–994 (DSIIQVKKLP…DEEDEDELIL (416 aa)) the chain is Cytoplasmic. The CBS 1 domain maps to 609–668 (MVRDVKFVSASCTYGELRNLLQTTTVKTLPLVDSKDSMILLGSVERSELQSLLQRHLCAE). 3 disordered regions span residues 710-769 (EDED…SADQ), 880-923 (TKSG…DGAP), and 965-994 (NLGP…ELIL). The segment covering 725 to 741 (TPTPPPPPPPPLPPQFP) has biased composition (pro residues). The CBS 2 domain maps to 827-882 (IDQSPFQLVEQTTLHKTHTLFSLLGLHLAYVTSMGKLRGVLALEELQKAIKGHTKS). A Phosphoserine modification is found at Ser892. Acidic residues predominate over residues 985–994 (DEEDEDELIL).

The protein belongs to the chloride channel (TC 2.A.49) family. ClC-1/CLCN1 subfamily. Homodimer. As to expression, predominantly expressed in skeletal muscles.

The protein localises to the cell membrane. The protein resides in the sarcolemma. Its subcellular location is the T-tubule. The catalysed reaction is chloride(in) = chloride(out). The enzyme catalyses bromide(in) = bromide(out). It catalyses the reaction iodide(out) = iodide(in). It carries out the reaction thiocyanate(in) = thiocyanate(out). The catalysed reaction is nitrate(in) = nitrate(out). Modulated by membrane voltage with depolarization favouring channel opening and hyperpolarization favouring channel closure. Inhibited by acidic pH and ATP binding due to a shift of voltage dependence of common gating to more positive voltages. Inhibited by 9-anthracene-carboxylic acid. Voltage-gated chloride channel involved in skeletal muscle excitability. Generates most of the plasma membrane chloride conductance in skeletal muscle fibers, stabilizes the resting membrane potential and contributes to the repolarization phase during action potential firing. Forms a homodimeric channel where each subunit has its own ion conduction pathway. Conducts double-barreled currents controlled by two types of gates, two fast glutamate gates that control each subunit independently and a slow common gate that opens and shuts off both subunits simultaneously. Has a significant open probability at muscle resting potential and is further activated upon membrane depolarization. Permeable to small monovalent anions with ion selectivity for chloride &gt; thiocyanate &gt; bromide &gt; nitrate &gt; iodide. The sequence is that of Chloride channel protein 1 (Clcn1) from Rattus norvegicus (Rat).